A 496-amino-acid chain; its full sequence is Anaerobic nitric oxide reductase flavorubredoxin (496 aa).

The interval Thr-30–Ile-210 is zinc metallo-hydrolase. Fe cation contacts are provided by His-79, Glu-81, Asp-83, His-147, Asp-166, and His-227. The Flavodoxin-like domain occupies Ile-254–Ala-393. FMN-binding positions include Ser-260–Asn-264 and Ala-342–Val-369. The 52-residue stretch at Lys-444–Ile-495 folds into the Rubredoxin-like domain. Residues Cys-449, Cys-452, Cys-482, and Cys-485 each contribute to the Fe cation site.

The protein in the N-terminal section; belongs to the zinc metallo-hydrolase group 3 family. In terms of assembly, homotetramer. It depends on Fe cation as a cofactor. Requires FMN as cofactor.

It localises to the cytoplasm. It functions in the pathway nitrogen metabolism; nitric oxide reduction. Its function is as follows. Anaerobic nitric oxide reductase; uses NADH to detoxify nitric oxide (NO), protecting several 4Fe-4S NO-sensitive enzymes. Has at least 2 reductase partners, only one of which (NorW, flavorubredoxin reductase) has been identified. NO probably binds to the di-iron center; electrons enter from the NorW at rubredoxin and are transferred sequentially to the FMN center and the di-iron center. Also able to function as an aerobic oxygen reductase. In Aliivibrio fischeri (strain ATCC 700601 / ES114) (Vibrio fischeri), this protein is Anaerobic nitric oxide reductase flavorubredoxin.